The following is a 541-amino-acid chain: Chaperonin GroEL 1 (541 aa).

Residues 29–32 (TLGP), 86–90 (DGTTT), Gly-413, 477–479 (NAA), and Asp-493 contribute to the ATP site.

It belongs to the chaperonin (HSP60) family. As to quaternary structure, forms a cylinder of 14 subunits composed of two heptameric rings stacked back-to-back. Interacts with the co-chaperonin GroES.

It localises to the cytoplasm. The catalysed reaction is ATP + H2O + a folded polypeptide = ADP + phosphate + an unfolded polypeptide.. Its function is as follows. Together with its co-chaperonin GroES, plays an essential role in assisting protein folding. The GroEL-GroES system forms a nano-cage that allows encapsulation of the non-native substrate proteins and provides a physical environment optimized to promote and accelerate protein folding. The chain is Chaperonin GroEL 1 from Nocardioides sp. (strain ATCC BAA-499 / JS614).